Consider the following 351-residue polypeptide: Chorismate synthase (351 aa).

The segment at 39–60 (EDIQRDLERRRPGKRLTSPRGE) is disordered. Residues R48 and R53 each contribute to the NADP(+) site. FMN-binding positions include 124 to 126 (RSS), A276, 291 to 295 (KPIPS), and R317.

Belongs to the chorismate synthase family. In terms of assembly, homotetramer. It depends on FMNH2 as a cofactor.

The catalysed reaction is 5-O-(1-carboxyvinyl)-3-phosphoshikimate = chorismate + phosphate. It participates in metabolic intermediate biosynthesis; chorismate biosynthesis; chorismate from D-erythrose 4-phosphate and phosphoenolpyruvate: step 7/7. Its function is as follows. Catalyzes the anti-1,4-elimination of the C-3 phosphate and the C-6 proR hydrogen from 5-enolpyruvylshikimate-3-phosphate (EPSP) to yield chorismate, which is the branch point compound that serves as the starting substrate for the three terminal pathways of aromatic amino acid biosynthesis. This reaction introduces a second double bond into the aromatic ring system. The polypeptide is Chorismate synthase (Syntrophobacter fumaroxidans (strain DSM 10017 / MPOB)).